A 493-amino-acid polypeptide reads, in one-letter code: Glutamyl-tRNA(Gln) amidotransferase subunit A (493 aa).

Catalysis depends on charge relay system residues K78 and S159. Catalysis depends on S183, which acts as the Acyl-ester intermediate.

This sequence belongs to the amidase family. GatA subfamily. Heterotrimer of A, B and C subunits.

It catalyses the reaction L-glutamyl-tRNA(Gln) + L-glutamine + ATP + H2O = L-glutaminyl-tRNA(Gln) + L-glutamate + ADP + phosphate + H(+). Allows the formation of correctly charged Gln-tRNA(Gln) through the transamidation of misacylated Glu-tRNA(Gln) in organisms which lack glutaminyl-tRNA synthetase. The reaction takes place in the presence of glutamine and ATP through an activated gamma-phospho-Glu-tRNA(Gln). The sequence is that of Glutamyl-tRNA(Gln) amidotransferase subunit A from Sphingopyxis alaskensis (strain DSM 13593 / LMG 18877 / RB2256) (Sphingomonas alaskensis).